Consider the following 370-residue polypeptide: Chloromuconate cycloisomerase (370 aa).

Catalysis depends on Lys165, which acts as the Proton acceptor. Positions 194, 220, and 245 each coordinate Mn(2+). Glu323 (proton donor) is an active-site residue.

It belongs to the mandelate racemase/muconate lactonizing enzyme family. Mn(2+) is required as a cofactor.

It carries out the reaction 2-[(2R)-2-chloro-2,5-dihydro-5-oxofuryl]acetate = 3-chloro-cis,cis-muconate + H(+). The protein operates within aromatic compound metabolism; 3-chlorocatechol degradation. This is Chloromuconate cycloisomerase (tcbD) from Pseudomonas sp. (strain P51).